The following is a 346-amino-acid chain: Putative [LysW]-L-2-aminoadipate/[LysW]-L-glutamate phosphate reductase (346 aa).

12–15 is an NADP(+) binding site; it reads SGFT. The active site involves cysteine 147. The interval 178-198 is disordered; that stretch reads GSSEGGAGGGDASSHPERSGV. Asparagine 310 contributes to the NADP(+) binding site.

This sequence belongs to the NAGSA dehydrogenase family. Type 1 subfamily. LysY sub-subfamily.

It is found in the cytoplasm. It catalyses the reaction [amino-group carrier protein]-C-terminal-N-(1-carboxy-5-oxopentan-1-yl)-L-glutamine + phosphate + NADP(+) = [amino-group carrier protein]-C-terminal-N-(1-carboxy-5-phosphooxy-5-oxopentan-1-yl)-L-glutamine + NADPH + H(+). It carries out the reaction [amino-group carrier protein]-C-terminal-gamma-(L-glutamyl-5-semialdehyde)-L-glutamate + phosphate + NADP(+) = [amino-group carrier protein]-C-terminal-gamma-(5-phospho-L-glutamyl)-L-glutamate + NADPH + H(+). It functions in the pathway amino-acid biosynthesis; L-lysine biosynthesis via AAA pathway; L-lysine from L-alpha-aminoadipate (Thermus route): step 3/5. It participates in amino-acid biosynthesis; L-arginine biosynthesis. Its function is as follows. Involved in both the arginine and lysine biosynthetic pathways. The sequence is that of Putative [LysW]-L-2-aminoadipate/[LysW]-L-glutamate phosphate reductase from Haloquadratum walsbyi (strain DSM 16790 / HBSQ001).